The chain runs to 373 residues: MTDNSNIRVVVGMSGGVDSSVTALLLKEQGYDVIGVFMKNWDDTDEFGVCTATEDYKDVAAVADQIGIPYYSVNFEKEYWDRVFEYFLAEYRAGRTPNPDVMCNKEIKFKAFLDYAMTLGADYVATGHYAQVTRDENGIVHMLRGADNNKDQTYFLSQLSQEQLQKTLFPLGHLQKPEVRRIAEEAGLATAKKKDSTGICFIGEKNFKDFLGQYLPAQPGRMMTVDGRDMGEHAGLMYYTIGQRGGLGIGGQHGGDNKPWFVVGKDLSKNILYVGQGFYHDSLMSTSLTASEIHFTRDMPNEFKLECTAKFRYRQPDSKVTVYVKGNQARVVFDDLQRAITPGQAVVFYNEQECLGGGMIDQAYRDDKICQYI.

ATP-binding positions include 12–19 and methionine 38; that span reads GMSGGVDS. The interval 98–100 is interaction with target base in tRNA; the sequence is NPD. The active-site Nucleophile is cysteine 103. The cysteines at positions 103 and 200 are disulfide-linked. Glycine 127 provides a ligand contact to ATP. Residues 150-152 are interaction with tRNA; that stretch reads KDQ. Cysteine 200 acts as the Cysteine persulfide intermediate in catalysis. Positions 312–313 are interaction with tRNA; that stretch reads RY.

It belongs to the MnmA/TRMU family.

It localises to the cytoplasm. The catalysed reaction is S-sulfanyl-L-cysteinyl-[protein] + uridine(34) in tRNA + AH2 + ATP = 2-thiouridine(34) in tRNA + L-cysteinyl-[protein] + A + AMP + diphosphate + H(+). Catalyzes the 2-thiolation of uridine at the wobble position (U34) of tRNA, leading to the formation of s(2)U34. The sequence is that of tRNA-specific 2-thiouridylase MnmA from Streptococcus agalactiae serotype III (strain NEM316).